The chain runs to 301 residues: Ribosomal protein L11 methyltransferase (301 aa).

Thr-147, Gly-168, Asp-190, and Asn-237 together coordinate S-adenosyl-L-methionine.

This sequence belongs to the methyltransferase superfamily. PrmA family.

It localises to the cytoplasm. It carries out the reaction L-lysyl-[protein] + 3 S-adenosyl-L-methionine = N(6),N(6),N(6)-trimethyl-L-lysyl-[protein] + 3 S-adenosyl-L-homocysteine + 3 H(+). Methylates ribosomal protein L11. The protein is Ribosomal protein L11 methyltransferase of Synechococcus sp. (strain RCC307).